Reading from the N-terminus, the 135-residue chain is S-adenosylmethionine decarboxylase proenzyme (135 aa).

Serine 63 (schiff-base intermediate with substrate; via pyruvic acid) is an active-site residue. A Pyruvic acid (Ser); by autocatalysis modification is found at serine 63. The Proton acceptor; for processing activity role is filled by histidine 68. Cysteine 83 (proton donor; for catalytic activity) is an active-site residue.

This sequence belongs to the prokaryotic AdoMetDC family. Type 1 subfamily. In terms of assembly, heterotetramer of two alpha and two beta chains arranged as a dimer of alpha/beta heterodimers. Pyruvate serves as cofactor. In terms of processing, is synthesized initially as an inactive proenzyme. Formation of the active enzyme involves a self-maturation process in which the active site pyruvoyl group is generated from an internal serine residue via an autocatalytic post-translational modification. Two non-identical subunits are generated from the proenzyme in this reaction, and the pyruvate is formed at the N-terminus of the alpha chain, which is derived from the carboxyl end of the proenzyme. The post-translation cleavage follows an unusual pathway, termed non-hydrolytic serinolysis, in which the side chain hydroxyl group of the serine supplies its oxygen atom to form the C-terminus of the beta chain, while the remainder of the serine residue undergoes an oxidative deamination to produce ammonia and the pyruvoyl group blocking the N-terminus of the alpha chain.

The catalysed reaction is S-adenosyl-L-methionine + H(+) = S-adenosyl 3-(methylsulfanyl)propylamine + CO2. The protein operates within amine and polyamine biosynthesis; S-adenosylmethioninamine biosynthesis; S-adenosylmethioninamine from S-adenosyl-L-methionine: step 1/1. In terms of biological role, catalyzes the decarboxylation of S-adenosylmethionine to S-adenosylmethioninamine (dcAdoMet), the propylamine donor required for the synthesis of the polyamines spermine and spermidine from the diamine putrescine. In Thermodesulfovibrio yellowstonii (strain ATCC 51303 / DSM 11347 / YP87), this protein is S-adenosylmethionine decarboxylase proenzyme.